The sequence spans 228 residues: Cytokinin riboside 5'-monophosphate phosphoribohydrolase LOG5 (228 aa).

Substrate-binding positions include E79, 97–98 (RK), and 114–120 (GYGTLEE).

This sequence belongs to the LOG family. As to expression, expressed in roots and shoots. Detected in vascular tissues of roots, cotyledons, and leaves, axillary buds, immature and mature flowers, fruit abscission zones and ovules.

Its subcellular location is the cytoplasm. The protein localises to the nucleus. The enzyme catalyses N(6)-(dimethylallyl)adenosine 5'-phosphate + H2O = N(6)-dimethylallyladenine + D-ribose 5-phosphate. It carries out the reaction 9-ribosyl-trans-zeatin 5'-phosphate + H2O = trans-zeatin + D-ribose 5-phosphate. In terms of biological role, cytokinin-activating enzyme working in the direct activation pathway. Phosphoribohydrolase that converts inactive cytokinin nucleotides to the biologically active free-base forms. The protein is Cytokinin riboside 5'-monophosphate phosphoribohydrolase LOG5 (LOG5) of Arabidopsis thaliana (Mouse-ear cress).